The sequence spans 122 residues: Small ribosomal subunit protein uS13 (122 aa).

Residues 93–122 are disordered; that stretch reads RRGLPVRGQKTKTNARTRKGPKKTMANKKK.

Belongs to the universal ribosomal protein uS13 family. Part of the 30S ribosomal subunit. Forms a loose heterodimer with protein S19. Forms two bridges to the 50S subunit in the 70S ribosome.

In terms of biological role, located at the top of the head of the 30S subunit, it contacts several helices of the 16S rRNA. In the 70S ribosome it contacts the 23S rRNA (bridge B1a) and protein L5 of the 50S subunit (bridge B1b), connecting the 2 subunits; these bridges are implicated in subunit movement. Contacts the tRNAs in the A and P-sites. The sequence is that of Small ribosomal subunit protein uS13 from Clostridium botulinum (strain Alaska E43 / Type E3).